The chain runs to 429 residues: Cytochrome bc1 complex Rieske iron-sulfur subunit (429 aa).

A disordered region spans residues 1–45 (MSRADDDAVGVPPTCGGRSDEEERRIVPGPNPQDGAKDGAKATAV). A run of 3 helical transmembrane segments spans residues 96-116 (VAVWLLLGGVFGLALLLIFLF), 137-157 (PLYGLTFGLSILSIAIGAVLY), and 207-227 (FGVGMGAFGLGTLVAFAGGLI). One can recognise a Rieske domain in the interval 316–410 (RNPVMLIRIK…ITIDTDGYLV (95 aa)). [2Fe-2S] cluster-binding residues include C353, H355, C372, and H375. An intrachain disulfide couples C358 to C374.

The protein belongs to the Rieske iron-sulfur protein family. The cytochrome bc1 complex is composed of a cytochrome b (QcrB), the Rieske iron-sulfur protein (QcrA) and a diheme cytochrome c (QcrC) subunit. [2Fe-2S] cluster serves as cofactor.

Its subcellular location is the cell membrane. Functionally, iron-sulfur subunit of the cytochrome bc1 complex, an essential component of the respiratory electron transport chain required for ATP synthesis. The bc1 complex catalyzes the oxidation of menaquinol and the reduction of cytochrome c in the respiratory chain. The bc1 complex operates through a Q-cycle mechanism that couples electron transfer to generation of the proton gradient that drives ATP synthesis. This chain is Cytochrome bc1 complex Rieske iron-sulfur subunit (qcrA), found in Mycobacterium bovis (strain ATCC BAA-935 / AF2122/97).